A 991-amino-acid polypeptide reads, in one-letter code: Bone morphogenetic protein 1 (991 aa).

A signal peptide spans 1–25 (MPGVARPPLPLLSLPLLLLLLLLPR). Positions 26 to 125 (AGRPLDLADY…RWRGRPRSRR (100 aa)) are excised as a propeptide. Positions 86-131 (ARRPSIKAAGNSSALGGQGTSGQPQRESRGRWRGRPRSRRAATSRP) are disordered. The span at 95 to 110 (GNSSALGGQGTSGQPQ) shows a compositional bias: polar residues. N-linked (GlcNAc...) asparagine glycosylation occurs at N96. A compositionally biased stretch (basic residues) spans 116 to 127 (RWRGRPRSRRAA). The region spanning 126–325 (AATSRPERVW…AQARKLYKCP (200 aa)) is the Peptidase M12A domain. A glycan (N-linked (GlcNAc...) asparagine) is linked at N147. Intrachain disulfides connect C168-C324, C188-C210, C190-C191, and C327-C353. H218 provides a ligand contact to Zn(2+). E219 is an active-site residue. 2 residues coordinate Zn(2+): H222 and H228. CUB domains follow at residues 327–439 (CGET…YEAI) and 440–551 (CGGD…NFFK). 2 N-linked (GlcNAc...) asparagine glycosylation sites follow: N337 and N368. Disulfide bonds link C380–C402, C440–C466, C493–C515, C556–C568, C564–C577, C579–C592, C596–C622, C649–C671, C712–C723, C719–C732, C734–C747, C752–C778, C805–C827, C865–C895, and C922–C944. In terms of domain architecture, EGF-like 1; calcium-binding spans 552–593 (EVDECSRPNRGGCEQRCLNTLGSYKCSCDPGYELAPDKRRCE). The CUB 3 domain maps to 596–707 (CGGFLTKLNG…KKGFKAHFFS (112 aa)). N604 is a glycosylation site (N-linked (GlcNAc...) asparagine). Residues 708–748 (DKDECSKDNGGCQQDCVNTFGSYECQCRSGFVLHDNKHDCK) enclose the EGF-like 2; calcium-binding domain. CUB domains are found at residues 752 to 864 (CEHK…HSTE) and 865 to 981 (CGGQ…YTST). R939 and R942 each carry omega-N-methylarginine.

In terms of assembly, interacts with POSTN, the interaction promotes deposition on the extracellular matrix. The cofactor is Zn(2+). As to expression, at high levels in embryonic maternal deciduum and floor plate region of the neural tube. Less in developing membranous and endochondral bone, submucosa of intestine, dermis of skin and the mesenchyme of spleen and lung.

The protein resides in the golgi apparatus. The protein localises to the trans-Golgi network. It localises to the secreted. It is found in the extracellular space. Its subcellular location is the extracellular matrix. It catalyses the reaction Cleavage of the C-terminal propeptide at Ala-|-Asp in type I and II procollagens and at Arg-|-Asp in type III.. Activity is increased by the procollagen C-endopeptidase enhancer protein. Functionally, metalloprotease that plays key roles in regulating the formation of the extracellular matrix (ECM) via processing of various precursor proteins into mature functional enzymes or structural proteins. Thereby participates in several developmental and physiological processes such as cartilage and bone formation, muscle growth and homeostasis, wound healing and tissue repair. Roles in ECM formation include cleavage of the C-terminal propeptides from procollagens such as procollagen I, II and III or the proteolytic activation of the enzyme lysyl oxidase LOX, necessary to formation of covalent cross-links in collagen and elastic fibers. Additional substrates include matricellular thrombospondin-1/THBS1 whose cleavage leads to cell adhesion disruption and TGF-beta activation. This Mus musculus (Mouse) protein is Bone morphogenetic protein 1 (Bmp1).